A 210-amino-acid polypeptide reads, in one-letter code: Na(+)-translocating NADH-quinone reductase subunit D (210 aa).

6 helical membrane-spanning segments follow: residues 14 to 34 (PIVS…ALAV), 42 to 62 (LVMT…ISIL), 72 to 92 (IIVQ…VLQA), 103 to 123 (VFVG…AYAM), 131 to 151 (FMDG…VGFI), and 178 to 198 (NGLL…IWII).

The protein belongs to the NqrDE/RnfAE family. In terms of assembly, composed of six subunits; NqrA, NqrB, NqrC, NqrD, NqrE and NqrF.

It localises to the cell inner membrane. The catalysed reaction is a ubiquinone + n Na(+)(in) + NADH + H(+) = a ubiquinol + n Na(+)(out) + NAD(+). Its function is as follows. NQR complex catalyzes the reduction of ubiquinone-1 to ubiquinol by two successive reactions, coupled with the transport of Na(+) ions from the cytoplasm to the periplasm. NqrA to NqrE are probably involved in the second step, the conversion of ubisemiquinone to ubiquinol. The chain is Na(+)-translocating NADH-quinone reductase subunit D from Shewanella halifaxensis (strain HAW-EB4).